Here is a 499-residue protein sequence, read N- to C-terminus: Centrosomal protein of 57 kDa (499 aa).

A compositionally biased stretch (low complexity) spans 1-16; it reads MAAASVSAASDSQFSS. The tract at residues 1–41 is disordered; the sequence is MAAASVSAASDSQFSSVLAEPSRSNGNMVHHSSSPYVLYPP. The segment covering 22 to 35 has biased composition (polar residues); it reads SRSNGNMVHHSSSP. Ser-53 is subject to Phosphoserine. Positions 58–239 are centrosome localization domain (CLD); it reads TFAYPESNSR…RAAELQSGIE (182 aa). Positions 63–242 form a coiled coil; the sequence is ESNSRAIFSA…ELQSGIEANR (180 aa). Disordered regions lie at residues 255 to 275 and 424 to 476; these read TSTRKIKKKKSKPPEKKGFRN and LEKQ…SRKN. Residues 278–490 are mediates interaction with microtubules; that stretch reads GAQPHYRLCL…KDMQTLQNSL (213 aa). A coiled-coil region spans residues 388–491; it reads PSEELKDNLE…DMQTLQNSLQ (104 aa). Basic and acidic residues predominate over residues 427-443; the sequence is QSTDKQKELKGNKKTLD. Positions 448-458 are enriched in low complexity; that stretch reads SSSRSSVITRT. Basic and acidic residues predominate over residues 460 to 474; that stretch reads SKKDFTKQRPGEKSR.

It belongs to the translokin family. In terms of assembly, homodimer and homooligomer. Interacts with FGF2 and RAP80. Does not interact with FGF1 or FGF2 isoform 24 kDa. Interacts with microtubules. Ubiquitous (at protein level).

Its subcellular location is the nucleus. It is found in the cytoplasm. It localises to the cytoskeleton. The protein resides in the microtubule organizing center. The protein localises to the centrosome. Functionally, centrosomal protein which may be required for microtubule attachment to centrosomes. May act by forming ring-like structures around microtubules. Mediates nuclear translocation and mitogenic activity of the internalized growth factor FGF2. This Rattus norvegicus (Rat) protein is Centrosomal protein of 57 kDa (Cep57).